A 152-amino-acid chain; its full sequence is Deoxyuridine 5'-triphosphate nucleotidohydrolase (152 aa).

Residues Arg-72–Gly-74, Asn-85, and Thr-89–Asp-91 contribute to the substrate site.

Belongs to the dUTPase family. The cofactor is Mg(2+).

It carries out the reaction dUTP + H2O = dUMP + diphosphate + H(+). Its pathway is pyrimidine metabolism; dUMP biosynthesis; dUMP from dCTP (dUTP route): step 2/2. This enzyme is involved in nucleotide metabolism: it produces dUMP, the immediate precursor of thymidine nucleotides and it decreases the intracellular concentration of dUTP so that uracil cannot be incorporated into DNA. In Bradyrhizobium sp. (strain ORS 278), this protein is Deoxyuridine 5'-triphosphate nucleotidohydrolase.